A 423-amino-acid chain; its full sequence is Chitinase 1 (423 aa).

The first 22 residues, 1-22 (MLSFVKKSIALVAALQAVTALA), serve as a signal peptide directing secretion. A propeptide spanning residues 23 to 34 (TPISSEAGVEKR) is cleaved from the precursor. Positions 38-401 (FANAVYFTNW…STSHQGLGSQ (364 aa)) constitute a GH18 domain. Chitin-binding positions include 102-103 (GT) and 129-132 (GGWT). The Proton donor role is filled by Glu-171. Chitin is bound by residues Tyr-172, 237 to 240 (MAYD), and Trp-378.

The protein belongs to the glycosyl hydrolase 18 family. Chitinase class V subfamily.

It is found in the secreted. It catalyses the reaction Random endo-hydrolysis of N-acetyl-beta-D-glucosaminide (1-&gt;4)-beta-linkages in chitin and chitodextrins.. This Aphanocladium album (Wheat rust fungus) protein is Chitinase 1 (CHI1).